We begin with the raw amino-acid sequence, 469 residues long: 3-isopropylmalate dehydratase large subunit (469 aa).

[4Fe-4S] cluster contacts are provided by cysteine 347, cysteine 410, and cysteine 413.

This sequence belongs to the aconitase/IPM isomerase family. LeuC type 1 subfamily. As to quaternary structure, heterodimer of LeuC and LeuD. Requires [4Fe-4S] cluster as cofactor.

It catalyses the reaction (2R,3S)-3-isopropylmalate = (2S)-2-isopropylmalate. It functions in the pathway amino-acid biosynthesis; L-leucine biosynthesis; L-leucine from 3-methyl-2-oxobutanoate: step 2/4. Its function is as follows. Catalyzes the isomerization between 2-isopropylmalate and 3-isopropylmalate, via the formation of 2-isopropylmaleate. The polypeptide is 3-isopropylmalate dehydratase large subunit (Burkholderia thailandensis (strain ATCC 700388 / DSM 13276 / CCUG 48851 / CIP 106301 / E264)).